The primary structure comprises 921 residues: Isoleucine--tRNA ligase (921 aa).

The 'HIGH' region signature appears at 57 to 67; the sequence is PYANGDIHMGH. E552 is an L-isoleucyl-5'-AMP binding site. Positions 593 to 597 match the 'KMSKS' region motif; it reads KMSKS. K596 contributes to the ATP binding site. C888, C891, C908, and C911 together coordinate Zn(2+).

It belongs to the class-I aminoacyl-tRNA synthetase family. IleS type 1 subfamily. In terms of assembly, monomer. It depends on Zn(2+) as a cofactor.

The protein localises to the cytoplasm. The catalysed reaction is tRNA(Ile) + L-isoleucine + ATP = L-isoleucyl-tRNA(Ile) + AMP + diphosphate. Functionally, catalyzes the attachment of isoleucine to tRNA(Ile). As IleRS can inadvertently accommodate and process structurally similar amino acids such as valine, to avoid such errors it has two additional distinct tRNA(Ile)-dependent editing activities. One activity is designated as 'pretransfer' editing and involves the hydrolysis of activated Val-AMP. The other activity is designated 'posttransfer' editing and involves deacylation of mischarged Val-tRNA(Ile). The polypeptide is Isoleucine--tRNA ligase (Bacillus cytotoxicus (strain DSM 22905 / CIP 110041 / 391-98 / NVH 391-98)).